We begin with the raw amino-acid sequence, 211 residues long: tRNA (guanine-N(7)-)-methyltransferase (211 aa).

The S-adenosyl-L-methionine site is built by Asp-40, Glu-65, Asn-92, and Asp-117. Asp-117 is an active-site residue. Residue Lys-121 coordinates substrate. The segment at 123 to 128 (RHNKRR) is interaction with RNA. Asp-153 contributes to the substrate binding site.

It belongs to the class I-like SAM-binding methyltransferase superfamily. TrmB family.

The enzyme catalyses guanosine(46) in tRNA + S-adenosyl-L-methionine = N(7)-methylguanosine(46) in tRNA + S-adenosyl-L-homocysteine. Its pathway is tRNA modification; N(7)-methylguanine-tRNA biosynthesis. Its function is as follows. Catalyzes the formation of N(7)-methylguanine at position 46 (m7G46) in tRNA. In Synechocystis sp. (strain ATCC 27184 / PCC 6803 / Kazusa), this protein is tRNA (guanine-N(7)-)-methyltransferase.